We begin with the raw amino-acid sequence, 510 residues long: Bifunctional purine biosynthesis protein PurH (510 aa).

Positions 1–145 (MTKRALLSVS…KNFAAVLPIV (145 aa)) constitute an MGS-like domain.

Belongs to the PurH family.

The catalysed reaction is (6R)-10-formyltetrahydrofolate + 5-amino-1-(5-phospho-beta-D-ribosyl)imidazole-4-carboxamide = 5-formamido-1-(5-phospho-D-ribosyl)imidazole-4-carboxamide + (6S)-5,6,7,8-tetrahydrofolate. It carries out the reaction IMP + H2O = 5-formamido-1-(5-phospho-D-ribosyl)imidazole-4-carboxamide. Its pathway is purine metabolism; IMP biosynthesis via de novo pathway; 5-formamido-1-(5-phospho-D-ribosyl)imidazole-4-carboxamide from 5-amino-1-(5-phospho-D-ribosyl)imidazole-4-carboxamide (10-formyl THF route): step 1/1. It participates in purine metabolism; IMP biosynthesis via de novo pathway; IMP from 5-formamido-1-(5-phospho-D-ribosyl)imidazole-4-carboxamide: step 1/1. This chain is Bifunctional purine biosynthesis protein PurH, found in Lactiplantibacillus plantarum (strain ATCC BAA-793 / NCIMB 8826 / WCFS1) (Lactobacillus plantarum).